The sequence spans 445 residues: Inward rectifier potassium channel 4 (445 aa).

Topologically, residues 1 to 55 (MHGHSRNGQAHVPRRKRRNRFVKKNGQCNVYFANLSNKSQRYMADIFTTCVDTRW) are cytoplasmic. Residues 56 to 80 (RYMLMIFSAAFLVSWLFFGLLFWCI) form a helical membrane-spanning segment. The Extracellular portion of the chain corresponds to 81–120 (AFFHGDLEASPGVPAAGGPAAGGGGAAPVAPKPCIMHVNG). A val/Gly/Ala/Pro stretch region spans residues 91–111 (PGVPAAGGPAAGGGGAAPVAP). Positions 121–132 (FLGAFLFSVETQ) form an intramembrane region, helical; Pore-forming. Residues 133–139 (TTIGYGF) constitute an intramembrane region (pore-forming). The short motif at 134–139 (TIGYGF) is the Selectivity filter element. At 140 to 148 (RCVTEECPL) the chain is on the extracellular side. A helical membrane pass occupies residues 149–170 (AVIAVVVQSIVGCVIDSFMIGT). Residues 171–445 (IMAKMARPKK…NISYRRESAI (275 aa)) lie on the Cytoplasmic side of the membrane. The PDZ-binding signature appears at 443–445 (SAI).

This sequence belongs to the inward rectifier-type potassium channel (TC 1.A.2.1) family. KCNJ4 subfamily. Homomultimeric and heteromultimeric association with KCNJ2 and KCNJ12. Interacts with DLG2 and DLG4. Associates, via its PDZ-recognition domain, with a complex containing LIN7A, LIN7B, LIN7C, DLG1, CASK and APBA1. Interacts with TAX1BP3. TAX1BP3 competes with LIN7 family members for KCNJ4 binding. As to expression, heart, skeletal muscle, and several different brain regions including the hippocampus.

The protein localises to the cell membrane. It is found in the postsynaptic cell membrane. Its subcellular location is the cytoplasmic vesicle membrane. It carries out the reaction K(+)(in) = K(+)(out). In terms of biological role, inward rectifier potassium channels are characterized by a greater tendency to allow potassium to flow into the cell rather than out of it. Their voltage dependence is regulated by the concentration of extracellular potassium; as external potassium is raised, the voltage range of the channel opening shifts to more positive voltages. The inward rectification is mainly due to the blockage of outward current by internal magnesium. Can be blocked by extracellular barium and cesium. This chain is Inward rectifier potassium channel 4 (KCNJ4), found in Homo sapiens (Human).